A 640-amino-acid polypeptide reads, in one-letter code: Chaperone protein dnaK2 (640 aa).

Thr197 is modified (phosphothreonine; by autocatalysis). The interval 605–640 (VYQSAQSSDGTGSSSSGGSGSGGDDEVIDAEFSETK) is disordered. Positions 627–640 (GDDEVIDAEFSETK) are enriched in acidic residues.

Belongs to the heat shock protein 70 family.

In terms of biological role, acts as a chaperone. This Thermosynechococcus vestitus (strain NIES-2133 / IAM M-273 / BP-1) protein is Chaperone protein dnaK2 (dnaK2).